Consider the following 281-residue polypeptide: Large ribosomal subunit protein uL2 (281 aa).

The interval 210–281 (RTRYAGQRPH…RGRKRGPHTR (72 aa)) is disordered. Over residues 254 to 281 (TVGKKTRSHKARSNKFIVRGRKRGPHTR) the composition is skewed to basic residues.

This sequence belongs to the universal ribosomal protein uL2 family. In terms of assembly, part of the 50S ribosomal subunit. Forms a bridge to the 30S subunit in the 70S ribosome.

Its function is as follows. One of the primary rRNA binding proteins. Required for association of the 30S and 50S subunits to form the 70S ribosome, for tRNA binding and peptide bond formation. It has been suggested to have peptidyltransferase activity; this is somewhat controversial. Makes several contacts with the 16S rRNA in the 70S ribosome. The sequence is that of Large ribosomal subunit protein uL2 from Limosilactobacillus reuteri subsp. reuteri (strain JCM 1112) (Lactobacillus reuteri).